The following is a 78-amino-acid chain: Esculentin-2ISa (78 aa).

A signal peptide spans 1 to 22 (MFTLKKSLLLLFFLGTISLSVC). Positions 23–39 (KQERDADYEDKGEVEEV) are cleaved as a propeptide — removed in mature form. Cysteines 72 and 78 form a disulfide.

As to expression, expressed by the skin glands.

It is found in the secreted. Its function is as follows. Has antimicrobial activity against Gram-negative bacterium E.coli ATCC 8739 (MIC=12.5 ug), against Gram positive bacteria S.aureus ATCC 6538 (MIC=3.1 ug), methicillin-resistant S.aureus ATCC 43300 (MIC=25 ug), B.subtilis ATCC 6633 (MIC=6.3 ug) and against fungus C.albicans ATCC 90028 (MIC=100 ug). In Odorrana ishikawae (Ishikawa's frog), this protein is Esculentin-2ISa.